We begin with the raw amino-acid sequence, 205 residues long: Protein phosphatase inhibitor 2 family member B (205 aa).

Residues 1-44 (MAASTASHRPIKGILKNKTSTTSSMVASAEQPRRSVDEELSKKS) are disordered. An N-acetylalanine modification is found at alanine 2. Required for binding PPP1CC stretches follow at residues 12 to 17 (KGILKN) and 43 to 55 (KSQK…ILAT). Residues 17–26 (NKTSTTSSMV) are compositionally biased toward polar residues. Over residues 31-44 (QPRRSVDEELSKKS) the composition is skewed to basic and acidic residues. Phosphoserine is present on serine 44. Phosphothreonine occurs at positions 89 and 92. Positions 111-142 (EPKYRIQEQESSGEEDSDLSPEEREKKRQFEM) are disordered. Residues serine 121, serine 122, serine 127, and serine 130 each carry the phosphoserine modification. Residues 121-130 (SSGEEDSDLS) are compositionally biased toward acidic residues. The segment covering 131–142 (PEEREKKRQFEM) has biased composition (basic and acidic residues). The segment at 147–150 (HYNE) is required for binding PPP1CC catalytic center, displacing metal ions and inhibition of PPP1CC catalytic activity. A disordered region spans residues 163–205 (KDLHDDDEDEEMLETADGESMNTEESNQGSTPSDQQQNKLRSS). A compositionally biased stretch (acidic residues) spans 167-179 (DDDEDEEMLETAD). Over residues 182 to 205 (SMNTEESNQGSTPSDQQQNKLRSS) the composition is skewed to polar residues.

Belongs to the protein phosphatase inhibitor 2 family. As to quaternary structure, interacts with PPP1CC. As to expression, only detected in spermatozoa, both heads and tails.

Its function is as follows. Inhibitor of protein-phosphatase 1. The protein is Protein phosphatase inhibitor 2 family member B of Homo sapiens (Human).